A 274-amino-acid chain; its full sequence is Large ribosomal subunit protein uL2 (274 aa).

Positions 224-254 are disordered; it reads AMNPVDHPHGGGEGRTGEGQAPVSPWNTLTK. The segment covering 229 to 239 has biased composition (basic and acidic residues); that stretch reads DHPHGGGEGRT.

Belongs to the universal ribosomal protein uL2 family. In terms of assembly, part of the 50S ribosomal subunit. Forms a bridge to the 30S subunit in the 70S ribosome.

One of the primary rRNA binding proteins. Required for association of the 30S and 50S subunits to form the 70S ribosome, for tRNA binding and peptide bond formation. It has been suggested to have peptidyltransferase activity; this is somewhat controversial. Makes several contacts with the 16S rRNA in the 70S ribosome. The polypeptide is Large ribosomal subunit protein uL2 (Leptothrix cholodnii (strain ATCC 51168 / LMG 8142 / SP-6) (Leptothrix discophora (strain SP-6))).